The primary structure comprises 888 residues: Leukocyte tyrosine kinase receptor (888 aa).

A signal peptide spans 1–16 (MGCSHRLLLWLGAAGT). The Extracellular portion of the chain corresponds to 17–421 (ILCSNSEFQT…CMDLPTTASP (405 aa)). Intrachain disulfides connect C73/C86 and C168/C179. Residues 226-294 (LVAAGGGGRS…RSPREGAEGG (69 aa)) form a disordered region. Residues 260 to 273 (GSGGRGGAAGGGSG) are compositionally biased toward gly residues. A disulfide bond links C297 and C319. 2 N-linked (GlcNAc...) asparagine glycosylation sites follow: N377 and N409. A helical transmembrane segment spans residues 422–446 (LILMGAVVAALALSLLMMCAVLILV). The Cytoplasmic portion of the chain corresponds to 447 to 888 (NQKCQGLWGT…SSSSSIPGIQ (442 aa)). The Protein kinase domain maps to 506 to 782 (VTLLRALGHG…IQYCTQDPDV (277 aa)). Residues 512–520 (LGHGAFGEV) and K540 contribute to the ATP site. The active-site Proton acceptor is D639. Phosphotyrosine; by autocatalysis is present on Y672. Positions 857–888 (TYGSWTPRGPQGEDTGIEHCNGSSSSSIPGIQ) are disordered. The segment covering 877-888 (NGSSSSSIPGIQ) has biased composition (polar residues).

Belongs to the protein kinase superfamily. Tyr protein kinase family. Insulin receptor subfamily. Homodimer; homodimerizes following ligand-binding. Part of a complex including LTK, TNK2 and GRB2, in which GRB2 promotes LTK recruitment by TNK2. Phosphorylated at tyrosine residues by autocatalysis, which activates kinase activity. As to expression, subsets of lymphoid and neuronal cells.

It is found in the cell membrane. It localises to the endoplasmic reticulum. The catalysed reaction is L-tyrosyl-[protein] + ATP = O-phospho-L-tyrosyl-[protein] + ADP + H(+). Activated by ligand-binding, leading to homodimerization and autophosphorylation. In terms of biological role, receptor with a tyrosine-protein kinase activity. Following activation by ALKAL1 or ALKAL2 ligands at the cell surface, transduces an extracellular signal into an intracellular response. Ligand-binding to the extracellular domain induces tyrosine kinase activation, leading to activation of the mitogen-activated protein kinase (MAPK) pathway. Phosphorylates almost exclusively at the first tyrosine of the Y-x-x-x-Y-Y motif. The exact function of this protein is not known; studies with chimeric proteins demonstrate its ability to promote growth and specifically neurite outgrowth, and cell survival. Involved in regulation of the secretory pathway involving endoplasmic reticulum (ER) export sites (ERESs) and ER to Golgi transport. In Mus musculus (Mouse), this protein is Leukocyte tyrosine kinase receptor.